A 346-amino-acid chain; its full sequence is Lipooligosaccharide heptosyltransferase 2 (346 aa).

Belongs to the glycosyltransferase 9 family.

The catalysed reaction is an L-alpha-D-Hep-(1-&gt;5)-[alpha-Kdo-(2-&gt;4)]-alpha-Kdo-(2-&gt;6)-lipid A + ADP-L-glycero-beta-D-manno-heptose = an L-alpha-D-Hep-(1-&gt;3)-L-alpha-D-Hep-(1-&gt;5)-[alpha-Kdo-(2-&gt;4)]-alpha-Kdo-(2-&gt;6)-lipid A + ADP + H(+). It functions in the pathway bacterial outer membrane biogenesis; LOS core biosynthesis. Its function is as follows. Glycosyltransferase involved in the biosynthesis of the core oligosaccharide region of lipooligosaccharide (LOS). Catalyzes the addition of a heptose unit to the heptosyl-Kdo2-lipid A module. The polypeptide is Lipooligosaccharide heptosyltransferase 2 (waaF) (Haemophilus influenzae (strain ATCC 51907 / DSM 11121 / KW20 / Rd)).